Reading from the N-terminus, the 2130-residue chain is Dedicator of cytokinesis protein 7 (2130 aa).

Serine 30 carries the phosphoserine modification. The disordered stretch occupies residues 137–175 (GFNPNTLDKQKERQKGLPRQVFESDEAPDGSSYQDEQDD). Phosphoserine is present on residues serine 180 and serine 182. Residues 365–395 (FKEADATKNKEKLEKLKSQADQFCQRLGKYR) are a coiled coil. An N6-methyllysine modification is found at lysine 381. The residue at position 450 (threonine 450) is a Phosphothreonine. Serine 452 bears the Phosphoserine mark. One can recognise a C2 DOCK-type domain in the interval 561–727 (RNLLYIYPQS…GVFNVEVVAV (167 aa)). A phosphoserine mark is found at serine 862, serine 864, serine 882, serine 888, serine 896, serine 900, and serine 905. The span at 888–901 (SLNLNRSRSLSNSN) shows a compositional bias: low complexity. Residues 888-966 (SLNLNRSRSL…SCNRMSSHTE (79 aa)) are disordered. 2 positions are modified to phosphothreonine: threonine 907 and threonine 909. Residues serine 910, serine 929, serine 963, serine 1382, serine 1420, serine 1422, serine 1424, and serine 1428 each carry the phosphoserine modification. Over residues 942–966 (SNPSPSAESTQAMDRSCNRMSSHTE) the composition is skewed to polar residues. Residues 1668 to 2104 (KGYQTSPDLR…LQPLINRKIP (437 aa)) form the DOCKER domain. Lysine 1952 carries the post-translational modification N6-acetyllysine. A coiled-coil region spans residues 2076 to 2102 (DQKEYQRELERNYHRLKEALQPLINRK). Serine 2119 is subject to Phosphoserine.

This sequence belongs to the DOCK family. In terms of assembly, component of the DOCK7-induced septin displacement/DISP complex, at least composed of DOCK7, LRCH3 and MYO6. Interacts with TSC1. Interacts with nucleotide-free RAC1 and RAC3. Interacts with TACC3. Interacts with CRY1. Interacts with NOD2.

It localises to the cell projection. The protein localises to the axon. Functions as a guanine nucleotide exchange factor (GEF), which activates Rac1 and Rac3 Rho small GTPases by exchanging bound GDP for free GTP. Does not have a GEF activity for CDC42. Required for STMN1 'Ser-15' phosphorylation during axon formation and consequently for neuronal polarization. As part of the DISP complex, may regulate the association of septins with actin and thereby regulate the actin cytoskeleton. Has a role in pigmentation. Involved in the regulation of cortical neurogenesis through the control of radial glial cells (RGCs) proliferation versus differentiation; negatively regulates the basal-to-apical interkinetic nuclear migration of RGCs by antagonizing the microtubule growth-promoting function of TACC3. The sequence is that of Dedicator of cytokinesis protein 7 (Dock7) from Mus musculus (Mouse).